The following is a 186-amino-acid chain: NADH-quinone oxidoreductase subunit B 2 (186 aa).

Positions 1–27 (MPSFTQPHSAPRNFQFPGQQRQGDPTM) are disordered. The [4Fe-4S] cluster site is built by C65, C66, C130, and C160.

The protein belongs to the complex I 20 kDa subunit family. NDH-1 is composed of 14 different subunits. Subunits NuoB, C, D, E, F, and G constitute the peripheral sector of the complex. The cofactor is [4Fe-4S] cluster.

It is found in the cell inner membrane. The enzyme catalyses a quinone + NADH + 5 H(+)(in) = a quinol + NAD(+) + 4 H(+)(out). NDH-1 shuttles electrons from NADH, via FMN and iron-sulfur (Fe-S) centers, to quinones in the respiratory chain. The immediate electron acceptor for the enzyme in this species is believed to be ubiquinone. Couples the redox reaction to proton translocation (for every two electrons transferred, four hydrogen ions are translocated across the cytoplasmic membrane), and thus conserves the redox energy in a proton gradient. The chain is NADH-quinone oxidoreductase subunit B 2 from Rhizobium etli (strain ATCC 51251 / DSM 11541 / JCM 21823 / NBRC 15573 / CFN 42).